We begin with the raw amino-acid sequence, 426 residues long: Glutamate-1-semialdehyde 2,1-aminomutase (426 aa).

The residue at position 265 (lysine 265) is an N6-(pyridoxal phosphate)lysine.

Belongs to the class-III pyridoxal-phosphate-dependent aminotransferase family. HemL subfamily. In terms of assembly, homodimer. The cofactor is pyridoxal 5'-phosphate.

The protein resides in the cytoplasm. The enzyme catalyses (S)-4-amino-5-oxopentanoate = 5-aminolevulinate. It participates in porphyrin-containing compound metabolism; protoporphyrin-IX biosynthesis; 5-aminolevulinate from L-glutamyl-tRNA(Glu): step 2/2. This Sodalis glossinidius (strain morsitans) protein is Glutamate-1-semialdehyde 2,1-aminomutase.